The primary structure comprises 104 residues: L-rhamnose mutarotase (104 aa).

Residue Y18 participates in substrate binding. The active-site Proton donor is the H22. Substrate-binding positions include Y41 and 76–77 (WW).

The protein belongs to the rhamnose mutarotase family. Homodimer.

The protein resides in the cytoplasm. It catalyses the reaction alpha-L-rhamnose = beta-L-rhamnose. It functions in the pathway carbohydrate metabolism; L-rhamnose metabolism. Functionally, involved in the anomeric conversion of L-rhamnose. This is L-rhamnose mutarotase from Opitutus terrae (strain DSM 11246 / JCM 15787 / PB90-1).